Reading from the N-terminus, the 953-residue chain is Isoleucine--tRNA ligase (953 aa).

The short motif at 57–67 (PYANGDIHIGH) is the 'HIGH' region element. Glutamate 582 contributes to the L-isoleucyl-5'-AMP binding site. Positions 623 to 627 (KMSKS) match the 'KMSKS' region motif. ATP is bound at residue lysine 626. Positions 916, 919, 936, and 939 each coordinate Zn(2+).

The protein belongs to the class-I aminoacyl-tRNA synthetase family. IleS type 1 subfamily. Monomer. Requires Zn(2+) as cofactor.

It is found in the cytoplasm. The catalysed reaction is tRNA(Ile) + L-isoleucine + ATP = L-isoleucyl-tRNA(Ile) + AMP + diphosphate. Catalyzes the attachment of isoleucine to tRNA(Ile). As IleRS can inadvertently accommodate and process structurally similar amino acids such as valine, to avoid such errors it has two additional distinct tRNA(Ile)-dependent editing activities. One activity is designated as 'pretransfer' editing and involves the hydrolysis of activated Val-AMP. The other activity is designated 'posttransfer' editing and involves deacylation of mischarged Val-tRNA(Ile). This Bordetella pertussis (strain Tohama I / ATCC BAA-589 / NCTC 13251) protein is Isoleucine--tRNA ligase.